The sequence spans 509 residues: Histidine--tRNA ligase, cytoplasmic (509 aa).

Ala-2 is modified (N-acetylalanine). One can recognise a WHEP-TRS domain in the interval 3 to 59 (DRAALEELVRLQGAHVRGLKEQKASAEQIEEEVTKLLKLKAQLGQDEGKQKFVLKTP). Position 66 is a phosphoserine (Ser-66). L-histidine-binding positions include 130-132 (DLT), Arg-157, Gln-173, Asp-177, Arg-326, and 330-331 (YY). Phosphoserine is present on Ser-356.

This sequence belongs to the class-II aminoacyl-tRNA synthetase family. Homodimer.

The protein localises to the cytoplasm. The enzyme catalyses tRNA(His) + L-histidine + ATP = L-histidyl-tRNA(His) + AMP + diphosphate + H(+). Its function is as follows. Catalyzes the ATP-dependent ligation of histidine to the 3'-end of its cognate tRNA, via the formation of an aminoacyl-adenylate intermediate (His-AMP). Plays a role in axon guidance. In Mus musculus (Mouse), this protein is Histidine--tRNA ligase, cytoplasmic (Hars1).